A 433-amino-acid chain; its full sequence is PHO85 cyclin-10 (433 aa).

Residues 1-10 (MDMTKNHTTD) are compositionally biased toward basic and acidic residues. Disordered regions lie at residues 1–20 (MDMTKNHTTDTEEFDDGDIR) and 51–81 (LTSEWDQSRSNTPGLAEGKTEKAQPCGTTDS). The span at 51–63 (LTSEWDQSRSNTP) shows a compositional bias: polar residues.

It belongs to the cyclin family. PHO80 subfamily. Forms a cyclin-CDK complex with PHO85. Interacts with GSY2, independent of the presence of PHO85.

Its subcellular location is the cytoplasm. Functionally, cyclin partner of the cyclin-dependent kinase (CDK) PHO85. Together with cyclin PCL8, negatively controls glycogen accumulation under favorable growth conditions. The PCL10-PHO85 cyclin-CDK holoenzyme has glycogen synthase kinase activity and phosphorylates and negatively regulates glycogen synthase GSY2. Also has minor GLC8 kinase activity. In Saccharomyces cerevisiae (strain ATCC 204508 / S288c) (Baker's yeast), this protein is PHO85 cyclin-10 (PCL10).